The sequence spans 216 residues: Alanyl-tRNA editing protein AlaX-M (216 aa).

Zn(2+) contacts are provided by H99, H103, and C182.

This sequence belongs to the class-II aminoacyl-tRNA synthetase family. Editing domain AlaX-M subfamily. In terms of assembly, monomer. The cofactor is Zn(2+).

It localises to the cytoplasm. Its function is as follows. Functions in trans to edit the amino acid moiety from mischarged charged Gly-tRNA(Ala) and Ser-tRNA(Ala). The protein is Alanyl-tRNA editing protein AlaX-M (alaXM) of Pyrococcus horikoshii (strain ATCC 700860 / DSM 12428 / JCM 9974 / NBRC 100139 / OT-3).